The sequence spans 436 residues: 3-ketoacyl-CoA thiolase (436 aa).

The active-site Acyl-thioester intermediate is Cys99. Residues His392 and Cys422 each act as proton acceptor in the active site.

The protein belongs to the thiolase-like superfamily. Thiolase family. Heterotetramer of two alpha chains (FadJ) and two beta chains (FadI).

It is found in the cytoplasm. It carries out the reaction an acyl-CoA + acetyl-CoA = a 3-oxoacyl-CoA + CoA. Its pathway is lipid metabolism; fatty acid beta-oxidation. Its function is as follows. Catalyzes the final step of fatty acid oxidation in which acetyl-CoA is released and the CoA ester of a fatty acid two carbons shorter is formed. The polypeptide is 3-ketoacyl-CoA thiolase (Shewanella loihica (strain ATCC BAA-1088 / PV-4)).